The sequence spans 169 residues: NADH-quinone oxidoreductase subunit B (169 aa).

Cys42, Cys43, Cys107, and Cys136 together coordinate [4Fe-4S] cluster.

The protein belongs to the complex I 20 kDa subunit family. As to quaternary structure, NDH-1 is composed of 14 different subunits. Subunits NuoB, C, D, E, F, and G constitute the peripheral sector of the complex. Requires [4Fe-4S] cluster as cofactor.

It localises to the cell inner membrane. The catalysed reaction is a quinone + NADH + 5 H(+)(in) = a quinol + NAD(+) + 4 H(+)(out). NDH-1 shuttles electrons from NADH, via FMN and iron-sulfur (Fe-S) centers, to quinones in the respiratory chain. The immediate electron acceptor for the enzyme in this species is believed to be ubiquinone. Couples the redox reaction to proton translocation (for every two electrons transferred, four hydrogen ions are translocated across the cytoplasmic membrane), and thus conserves the redox energy in a proton gradient. The chain is NADH-quinone oxidoreductase subunit B from Nitratiruptor sp. (strain SB155-2).